Consider the following 573-residue polypeptide: Proline--tRNA ligase (573 aa).

It belongs to the class-II aminoacyl-tRNA synthetase family. ProS type 1 subfamily. Homodimer.

The protein resides in the cytoplasm. It catalyses the reaction tRNA(Pro) + L-proline + ATP = L-prolyl-tRNA(Pro) + AMP + diphosphate. Functionally, catalyzes the attachment of proline to tRNA(Pro) in a two-step reaction: proline is first activated by ATP to form Pro-AMP and then transferred to the acceptor end of tRNA(Pro). As ProRS can inadvertently accommodate and process non-cognate amino acids such as alanine and cysteine, to avoid such errors it has two additional distinct editing activities against alanine. One activity is designated as 'pretransfer' editing and involves the tRNA(Pro)-independent hydrolysis of activated Ala-AMP. The other activity is designated 'posttransfer' editing and involves deacylation of mischarged Ala-tRNA(Pro). The misacylated Cys-tRNA(Pro) is not edited by ProRS. This chain is Proline--tRNA ligase, found in Elusimicrobium minutum (strain Pei191).